Reading from the N-terminus, the 292-residue chain is Non-homologous end joining protein Ku (292 aa).

Positions Ile-9–Leu-187 constitute a Ku domain. The span at Ala-264–Ala-285 shows a compositional bias: low complexity. The disordered stretch occupies residues Ala-264–Ala-292.

It belongs to the prokaryotic Ku family. Homodimer. Interacts with LigD.

Functionally, with LigD forms a non-homologous end joining (NHEJ) DNA repair enzyme, which repairs dsDNA breaks with reduced fidelity. Binds linear dsDNA with 5'- and 3'- overhangs but not closed circular dsDNA nor ssDNA. Recruits and stimulates the ligase activity of LigD. This is Non-homologous end joining protein Ku from Leifsonia xyli subsp. xyli (strain CTCB07).